Here is a 241-residue protein sequence, read N- to C-terminus: Uridylate kinase (241 aa).

Residue 12–15 participates in ATP binding; the sequence is KISG. The segment at 20 to 25 is involved in allosteric activation by GTP; it reads GDKGNG. Gly-54 contacts UMP. ATP contacts are provided by Gly-55 and Arg-59. UMP contacts are provided by residues Asp-74 and 135 to 142; that span reads TGNPYFST. ATP contacts are provided by Asn-163, Tyr-169, and Asp-172.

This sequence belongs to the UMP kinase family. In terms of assembly, homohexamer.

The protein resides in the cytoplasm. The enzyme catalyses UMP + ATP = UDP + ADP. Its pathway is pyrimidine metabolism; CTP biosynthesis via de novo pathway; UDP from UMP (UMPK route): step 1/1. With respect to regulation, allosterically activated by GTP. Inhibited by UTP. Catalyzes the reversible phosphorylation of UMP to UDP. This chain is Uridylate kinase, found in Lactobacillus acidophilus (strain ATCC 700396 / NCK56 / N2 / NCFM).